The primary structure comprises 282 residues: Succinate dehydrogenase [ubiquinone] iron-sulfur subunit, mitochondrial (282 aa).

In terms of domain architecture, 2Fe-2S ferredoxin-type spans 43-131 (YRFNPEAPGA…STKIYPLPHM (89 aa)). Residues C91, C96, C99, and C111 each contribute to the [2Fe-2S] cluster site. Positions 174–204 (ERDRLDGLYECILCACCSTSCPSYWWNADKY) constitute a 4Fe-4S ferredoxin-type domain. [4Fe-4S] cluster-binding residues include C184, C187, and C190. [3Fe-4S] cluster is bound at residue C194. W199 is an a ubiquinone binding site. Residues C241 and C247 each coordinate [3Fe-4S] cluster. C251 is a [4Fe-4S] cluster binding site.

This sequence belongs to the succinate dehydrogenase/fumarate reductase iron-sulfur protein family. Component of complex II composed of four subunits: a flavoprotein (FP), an iron-sulfur protein (IP), and a cytochrome b composed of a large and a small subunit. [2Fe-2S] cluster is required as a cofactor. The cofactor is [3Fe-4S] cluster. It depends on [4Fe-4S] cluster as a cofactor.

It is found in the mitochondrion inner membrane. The enzyme catalyses a quinone + succinate = fumarate + a quinol. Its pathway is carbohydrate metabolism; tricarboxylic acid cycle; fumarate from succinate (eukaryal route): step 1/1. Functionally, iron-sulfur protein (IP) subunit of succinate dehydrogenase (SDH) that is involved in complex II of the mitochondrial electron transport chain and is responsible for transferring electrons from succinate to ubiquinone (coenzyme Q). The polypeptide is Succinate dehydrogenase [ubiquinone] iron-sulfur subunit, mitochondrial (Caenorhabditis briggsae).